We begin with the raw amino-acid sequence, 221 residues long: Vacuolar protein sorting-associated protein 20 (221 aa).

Glycine 2 is lipidated: N-myristoyl glycine. The stretch at 72-178 (QEHLLQQASD…LNPEKMNNAK (107 aa)) forms a coiled coil. The tract at residues 170 to 221 (NPEKMNNAKVANMPSTEGLPSLPQGEQTEQKEREEFATEERSDTKEPLALLS) is disordered. Residues 197–215 (TEQKEREEFATEERSDTKE) show a composition bias toward basic and acidic residues.

It belongs to the SNF7 family. Core component of the ESCRT-III complex (endosomal sorting required for transport complex III). ESCRT-III appears to be sequentially assembled as a flat lattice on the endosome membrane and forms a transient 450 kDa complex that contains DID4, oligomerized SNF7, VPS20 and VPS24. SNF7 oligomerization into a membrane-associated filament is nucleated by association of SNF7 with VPS20; the process is terminated through association of VPS24, possibly by capping the SNF7 filament. VPS24 subsequently associates with DID4/VPS2. Interacts with the VPS4. Interacts with VPS25; the interaction mediates the association with the ESCRT-II complex.

The protein resides in the endosome membrane. The protein localises to the vacuole membrane. Functionally, class E VPS protein implicated in concentration and sorting of cargo proteins of the multivesicular body (MVB) for incorporation into intralumenal vesicles. The lumenal sequestrated membrane proteins will be targeted into the vacuole after fusion of the endosome with the vacuole. Acts a component of the ESCRT-III complex, which appears to be critical for late steps in MVB sorting, such as membrane invagination and final cargo sorting and recruitment of late-acting components of the sorting machinery. The MVB pathway requires the sequential function of ESCRT-O, -I,-II and -III complex assemblies. Required for the oligomerization of SNF7 into a membrane-associated filament. The VPS20-SNF7 subcomplex is responsible for the membrane association of the ESCRT-III complex. Also required for the RIM101 repressor proteolytic activation. In Saccharomyces cerevisiae (strain ATCC 204508 / S288c) (Baker's yeast), this protein is Vacuolar protein sorting-associated protein 20 (VPS20).